A 59-amino-acid chain; its full sequence is Large ribosomal subunit protein uL30 (59 aa).

Belongs to the universal ribosomal protein uL30 family. In terms of assembly, part of the 50S ribosomal subunit.

This Pelotomaculum thermopropionicum (strain DSM 13744 / JCM 10971 / SI) protein is Large ribosomal subunit protein uL30.